The sequence spans 1579 residues: tRNA (guanosine(18)-2'-O)-methyltransferase TARBP1 (1579 aa).

An N-acetylmethionine modification is found at M1. S-adenosyl-L-homocysteine-binding residues include V1501, G1524, I1544, Q1546, and L1553.

Belongs to the class IV-like SAM-binding methyltransferase superfamily. RNA methyltransferase TrmH family. As to quaternary structure, monomer and homodimer.

It carries out the reaction guanosine(18) in tRNA + S-adenosyl-L-methionine = 2'-O-methylguanosine(18) in tRNA + S-adenosyl-L-homocysteine + H(+). Functionally, S-adenosyl-L-methionine-dependent 2'-O-ribose methyltransferase that catalyzes the formation of 2'-O-methylguanosine at position 18 (Gm18) in a subset of tRNA. Selectively mediates Gm18 methylation of tRNAGln-TTG/CTG and tRNASer-TGA/GCT. Gm18 modification can enhance the stability of modified tRNAs. This chain is tRNA (guanosine(18)-2'-O)-methyltransferase TARBP1, found in Mus musculus (Mouse).